Consider the following 1183-residue polypeptide: SRC kinase signaling inhibitor 1 (1183 aa).

A disordered region spans residues methionine 1–phenylalanine 44. Residues serine 13 and serine 18 each carry the phosphoserine modification. Positions leucine 31–glycine 41 are enriched in gly residues. Serine 45 carries the phosphoserine modification. Threonine 52 carries the post-translational modification Phosphothreonine. Phosphoserine occurs at positions 53, 64, 143, 165, 169, 179, and 225. Tyrosine 241 is subject to Phosphotyrosine. Residues alanine 284 to aspartate 379 form a disordered region. Positions arginine 286–asparagine 296 are enriched in polar residues. Residues leucine 297 to glycine 306 show a composition bias toward low complexity. Serine 298, serine 307, and serine 324 each carry phosphoserine. The span at proline 313–serine 331 shows a compositional bias: low complexity. 2 positions are modified to omega-N-methylarginine: arginine 329 and arginine 336. Serine 343, serine 362, and serine 364 each carry phosphoserine. Over residues leucine 369–aspartate 379 the composition is skewed to basic and acidic residues. Tyrosine 396 is modified (phosphotyrosine). Residues tyrosine 466–threonine 643 are disordered. The span at proline 485–glycine 497 shows a compositional bias: pro residues. A phosphoserine mark is found at serine 493, serine 496, and serine 500. At arginine 501 the chain carries Omega-N-methylarginine. Phosphoserine is present on residues serine 503, serine 513, serine 515, serine 517, and serine 522. Positions glycine 524–serine 541 are enriched in low complexity. The segment covering lysine 562–glutamate 574 has biased composition (basic and acidic residues). 2 positions are modified to phosphoserine: serine 598 and serine 621. Threonine 624 and threonine 637 each carry phosphothreonine. Residues alanine 634–threonine 643 show a composition bias toward low complexity. Residues arginine 647–valine 697 form an interaction with SNAP25 region. 2 coiled-coil regions span residues leucine 654–leucine 674 and glutamate 726–aspartate 746. Phosphoserine is present on residues serine 844, serine 857, and serine 866. Disordered stretches follow at residues glutamate 861–serine 907 and aspartate 949–lysine 1032. Threonine 884 is modified (phosphothreonine). Serine 987 bears the Phosphoserine mark. Positions lysine 1002–arginine 1011 are enriched in pro residues. Residues serine 1043 and serine 1060 each carry the phosphoserine modification. Disordered stretches follow at residues alanine 1058–aspartate 1081 and glycine 1105–phenylalanine 1183. The span at glutamine 1135 to phenylalanine 1183 shows a compositional bias: polar residues.

Belongs to the SRCIN1 family. Interacts with the N-terminal coiled-coil region of SNAP25. Interacts with BCAR1/p130Cas and SRC through its C-terminal domain. Interacts with CSK, CTTN, SORBS3/vinexin, SYP and MAPRE3/EB3. Post-translationally, tyrosine-phosphorylated in response to EGF and to cell adhesion to integrin ligands. In terms of tissue distribution, expressed in some primary breast carcinomas where its presence is significantly associated with increased tumor size. Not detected in normal breast tissue.

Its subcellular location is the cytoplasm. The protein localises to the cytoskeleton. It is found in the cell projection. It localises to the axon. The protein resides in the dendrite. Its subcellular location is the presynapse. The protein localises to the postsynapse. It is found in the postsynaptic density. Acts as a negative regulator of SRC by activating CSK which inhibits SRC activity and downstream signaling, leading to impaired cell spreading and migration. Regulates dendritic spine morphology. Involved in calcium-dependent exocytosis. May play a role in neurotransmitter release or synapse maintenance. The polypeptide is SRC kinase signaling inhibitor 1 (Homo sapiens (Human)).